Reading from the N-terminus, the 1416-residue chain is Tiny macrocysts protein B (1416 aa).

The next 8 membrane-spanning stretches (helical) occupy residues 47–67 (ILTI…GFKH), 93–113 (FGYL…ILGF), 140–160 (FVSF…LIGL), 185–205 (ANLP…IVAF), 231–251 (VTVL…DFVP), 253–273 (LTSI…IIVL), 285–305 (SGFY…MGIN), and 315–335 (ITIV…MFYF). Residues 356–372 (LKDANKKGKRNSVEKES) are compositionally biased toward basic and acidic residues. Disordered stretches follow at residues 356 to 377 (LKDA…PTSK) and 662 to 691 (IEKS…RRGK). The next 2 membrane-spanning stretches (helical) occupy residues 706-726 (WLMI…LVVF) and 953-973 (AILY…AVLF). Disordered regions lie at residues 1018–1103 (RDNL…RPLM) and 1119–1144 (NVRL…ATRT). The segment covering 1024–1039 (TTDDDGRDDHLGEDDN) has biased composition (acidic residues). Low complexity-rich tracts occupy residues 1048-1062 (NNNN…NNNN) and 1083-1094 (SSSGSNVLNTSS). The span at 1123–1144 (QAKDEEITNGGGERKGSDATRT) shows a compositional bias: basic and acidic residues. Helical transmembrane passes span 1179 to 1199 (ILAT…TFTV), 1325 to 1345 (WFLA…FTYF), and 1358 to 1378 (VLTA…VVLF).

The protein resides in the membrane. Regulator of the cAMP signaling pathway specific to sexual development. Controls the levels of external cAMP by regulating the expression of phosphodiesterase pdsA and its inhibitor pdiA. This Dictyostelium discoideum (Social amoeba) protein is Tiny macrocysts protein B (tmcB).